The primary structure comprises 105 residues: Large ribosomal subunit protein uL24 (105 aa).

Belongs to the universal ribosomal protein uL24 family. In terms of assembly, part of the 50S ribosomal subunit.

In terms of biological role, one of two assembly initiator proteins, it binds directly to the 5'-end of the 23S rRNA, where it nucleates assembly of the 50S subunit. Its function is as follows. One of the proteins that surrounds the polypeptide exit tunnel on the outside of the subunit. This chain is Large ribosomal subunit protein uL24, found in Cellvibrio japonicus (strain Ueda107) (Pseudomonas fluorescens subsp. cellulosa).